The chain runs to 137 residues: Small ribosomal subunit protein uS9 (137 aa).

Positions 100–137 are disordered; it reads ENRPPLKSEGYLTRDPRAKERKKYGLHKARKAPQYSKR. The segment covering 118–137 has biased composition (basic residues); that stretch reads KERKKYGLHKARKAPQYSKR.

It belongs to the universal ribosomal protein uS9 family.

The protein is Small ribosomal subunit protein uS9 of Microcystis aeruginosa (strain NIES-843 / IAM M-2473).